The primary structure comprises 234 residues: MRLVQLSRHSIAFPSPEGALREPNGLLALGGDLSPARLLMAYQRGIFPWFSPGDPILWWSPDPRAVLWPESLHISRSMKRFHKRSPYRVTMNYAFGQVIEGCASDREEGTWITRGVVEAYHRLHELGHAHSIEVWREDELVGGMYGVAQGTLFCGESMFSRMENASKTALLVFCDEFIRHGGKLIDCQVLNDHTASLGACEIPRRDYLNYLNQMRLGRLPNNFWVPRCLFSPQE.

The protein belongs to the L/F-transferase family.

It localises to the cytoplasm. The catalysed reaction is N-terminal L-lysyl-[protein] + L-leucyl-tRNA(Leu) = N-terminal L-leucyl-L-lysyl-[protein] + tRNA(Leu) + H(+). The enzyme catalyses N-terminal L-arginyl-[protein] + L-leucyl-tRNA(Leu) = N-terminal L-leucyl-L-arginyl-[protein] + tRNA(Leu) + H(+). It catalyses the reaction L-phenylalanyl-tRNA(Phe) + an N-terminal L-alpha-aminoacyl-[protein] = an N-terminal L-phenylalanyl-L-alpha-aminoacyl-[protein] + tRNA(Phe). Functions in the N-end rule pathway of protein degradation where it conjugates Leu, Phe and, less efficiently, Met from aminoacyl-tRNAs to the N-termini of proteins containing an N-terminal arginine or lysine. The polypeptide is Leucyl/phenylalanyl-tRNA--protein transferase (Escherichia coli O45:K1 (strain S88 / ExPEC)).